We begin with the raw amino-acid sequence, 471 residues long: Ribulose bisphosphate carboxylase large chain (471 aa).

An N6,N6,N6-trimethyllysine modification is found at Lys-5. Residues Asn-114 and Thr-164 each contribute to the substrate site. Residue Lys-166 is the Proton acceptor of the active site. A substrate-binding site is contributed by Lys-168. Mg(2+)-binding residues include Lys-192, Asp-194, and Glu-195. Lys-192 is modified (N6-carboxylysine). His-285 serves as the catalytic Proton acceptor. Arg-286, His-318, and Ser-370 together coordinate substrate.

The protein belongs to the RuBisCO large chain family. Type I subfamily. As to quaternary structure, heterohexadecamer of 8 large chains and 8 small chains; disulfide-linked. The disulfide link is formed within the large subunit homodimers. Mg(2+) is required as a cofactor. The disulfide bond which can form in the large chain dimeric partners within the hexadecamer appears to be associated with oxidative stress and protein turnover.

It localises to the plastid. The protein resides in the chloroplast. It carries out the reaction 2 (2R)-3-phosphoglycerate + 2 H(+) = D-ribulose 1,5-bisphosphate + CO2 + H2O. It catalyses the reaction D-ribulose 1,5-bisphosphate + O2 = 2-phosphoglycolate + (2R)-3-phosphoglycerate + 2 H(+). Functionally, ruBisCO catalyzes two reactions: the carboxylation of D-ribulose 1,5-bisphosphate, the primary event in carbon dioxide fixation, as well as the oxidative fragmentation of the pentose substrate in the photorespiration process. Both reactions occur simultaneously and in competition at the same active site. The sequence is that of Ribulose bisphosphate carboxylase large chain from Deppea grandiflora.